Consider the following 280-residue polypeptide: Vitamin B12-binding protein (280 aa).

Residues 1-27 (MMPLGLFPLPRAAAVLLISLLTLPAQA) form the signal peptide. The Fe/B12 periplasmic-binding domain maps to 30–277 (RVISLSPSTT…QMASIPTPVA (248 aa)). Cyanocob(III)alamin is bound at residue Y57. The cysteines at positions 190 and 266 are disulfide-linked.

This sequence belongs to the BtuF family. In terms of assembly, the complex is composed of two ATP-binding proteins (BtuD), two transmembrane proteins (BtuC) and a solute-binding protein (BtuF).

It is found in the periplasm. Part of the ABC transporter complex BtuCDF involved in vitamin B12 import. Binds vitamin B12 and delivers it to the periplasmic surface of BtuC. This chain is Vitamin B12-binding protein, found in Yersinia pestis bv. Antiqua (strain Antiqua).